The sequence spans 668 residues: Protein brown (668 aa).

The Cytoplasmic segment spans residues 1 to 412 (MPMDEGDAQG…TEDLANIRSG (412 aa)). In terms of domain architecture, ABC transporter spans 31–328 (YSFWNECRKQ…FTEGFMQPKN (298 aa)). 63–70 (GGSGAGKT) provides a ligand contact to ATP. Residues 413-433 (LIGFGFFMTTAVTLSLMYSGV) traverse the membrane as a helical segment. The Extracellular segment spans residues 434–453 (GGLTQRTVQDVGGSIFMLSN). A helical transmembrane segment spans residues 454 to 474 (EMIFTFSYGVTYIFPAALPII). Over 475-490 (RREVAEGTYSLSAYYV) the chain is Cytoplasmic. The helical transmembrane segment at 491–511 (ALVLSFVPVAFFKGYMFLSVI) threads the bilayer. The Extracellular segment spans residues 512 to 524 (YASIYYTRGFLLY). A helical transmembrane segment spans residues 525 to 545 (ITMGFLMSLSAIAAVGYGVFL). Residues 546 to 561 (SSLFETDKMASECAAP) lie on the Cytoplasmic side of the membrane. The helical transmembrane segment at 562–582 (FDLIFLIFGGTYMNVDSVPLL) threads the bilayer. At 583–637 (KYFSLFFYSNEALMYNFWIDIDNIACXVNDEHPCCQTGLEVLQQASFRTADYTFW) the chain is on the extracellular side. A helical transmembrane segment spans residues 638–658 (LDCASLLVVALVFHIVSFTLI). At 659 to 668 (RRYINRSGYY) the chain is on the cytoplasmic side.

It belongs to the ABC transporter superfamily. ABCG family. Eye pigment precursor importer (TC 3.A.1.204) subfamily. In terms of assembly, may form a heterodimer with w/white. As to expression, expressed in eyes.

The protein resides in the membrane. It catalyses the reaction guanine(out) + ATP + H2O = guanine(in) + ADP + phosphate + H(+). It carries out the reaction riboflavin(in) + ATP + H2O = riboflavin(out) + ADP + phosphate + H(+). The enzyme catalyses (6S)-5,6,7,8-tetrahydrofolate(out) + ATP + H2O = (6S)-5,6,7,8-tetrahydrofolate(in) + ADP + phosphate + H(+). Functionally, ATP-dependent transporter of the ATP-binding cassette (ABC) family which transports various molecules including bioamines, neurotransmitters and metabolic intermediates. In the eye and probably in association with w/white, required for the transport of the eye red pigment precursor, guanine, into pigment cell granules. In Malpighian tubules, involved in guanine uptake. Probably in association with w/white, involved in aging-induced intestinal stem cell proliferation in the midgut by regulating tetrahydrofolate transport. This Drosophila virilis (Fruit fly) protein is Protein brown.